We begin with the raw amino-acid sequence, 175 residues long: Pituitary adenylate cyclase-activating polypeptide (175 aa).

The first 24 residues, 1–24 (MTMCSGARLALLVYGIIMHSSVSC), serve as a signal peptide directing secretion. Positions 25–78 (SPAAGLSFPGIRPEDEAYDQDGNPLQDFYDWDPPGVGSPASALRDAYALYYPAD) are excised as a propeptide. An important for receptor binding region spans residues 149–157 (VKKYLAAVL). Leucine amide is present on Leu157. Lysine amide is present on Lys168. The propeptide occupies 172–175 (IAYL).

It belongs to the glucagon family.

Its subcellular location is the secreted. Its function is as follows. PACAP is a neuropeptide involved in diverse array of physiological processes through activating the PACAP subfamily of class B1 G protein-coupled receptors: VIP receptor 1 (VIPR1), VIP receptor 2 (VIPR2), and PACAP type I receptor (ADCYAP1R1). Exerts neuroprotective and general cytoprotective effects due to anti-apoptotic, anti-inflammatory, and antioxidant actions. Promotes neuron projection development through the RAPGEF2/Rap1/B-Raf/ERK pathway. In chromaffin cells, induces long-lasting increase of intracellular calcium concentrations and neuroendocrine secretion. Involved in the control of glucose homeostasis, induces insulin secretion by pancreatic beta cells. PACAP exists in two bioactive forms from proteolysis of the same precursor protein, PACAP27 and PACAP38, which differ by eleven amino acid residues in the C-terminus. This chain is Pituitary adenylate cyclase-activating polypeptide, found in Mus musculus (Mouse).